Here is a 244-residue protein sequence, read N- to C-terminus: UPF0173 metal-dependent hydrolase Rcas_3617 (244 aa).

It belongs to the UPF0173 family.

In Roseiflexus castenholzii (strain DSM 13941 / HLO8), this protein is UPF0173 metal-dependent hydrolase Rcas_3617.